The chain runs to 174 residues: RNA pyrophosphohydrolase (174 aa).

Residues glycine 6–lysine 149 enclose the Nudix hydrolase domain. The short motif at glycine 38 to glycine 59 is the Nudix box element.

Belongs to the Nudix hydrolase family. RppH subfamily. It depends on a divalent metal cation as a cofactor.

Accelerates the degradation of transcripts by removing pyrophosphate from the 5'-end of triphosphorylated RNA, leading to a more labile monophosphorylated state that can stimulate subsequent ribonuclease cleavage. In Photobacterium profundum (strain SS9), this protein is RNA pyrophosphohydrolase.